The primary structure comprises 308 residues: Aspartate carbamoyltransferase catalytic subunit (308 aa).

Residues arginine 57 and threonine 58 each coordinate carbamoyl phosphate. Lysine 86 contacts L-aspartate. Arginine 107, histidine 135, and glutamine 138 together coordinate carbamoyl phosphate. Residues arginine 167 and arginine 228 each coordinate L-aspartate. Carbamoyl phosphate contacts are provided by leucine 267 and proline 268.

The protein belongs to the aspartate/ornithine carbamoyltransferase superfamily. ATCase family. As to quaternary structure, heterooligomer of catalytic and regulatory chains.

It catalyses the reaction carbamoyl phosphate + L-aspartate = N-carbamoyl-L-aspartate + phosphate + H(+). It functions in the pathway pyrimidine metabolism; UMP biosynthesis via de novo pathway; (S)-dihydroorotate from bicarbonate: step 2/3. Its function is as follows. Catalyzes the condensation of carbamoyl phosphate and aspartate to form carbamoyl aspartate and inorganic phosphate, the committed step in the de novo pyrimidine nucleotide biosynthesis pathway. The polypeptide is Aspartate carbamoyltransferase catalytic subunit (Methanococcoides burtonii (strain DSM 6242 / NBRC 107633 / OCM 468 / ACE-M)).